The following is a 430-amino-acid chain: Centrosomal protein CEP57L1 (430 aa).

Phosphoserine is present on serine 45. Residues 46 to 213 adopt a coiled-coil conformation; sequence PNNQALVSAL…HQRRLFQDRA (168 aa). Disordered regions lie at residues 248-290 and 362-430; these read CLKR…GEPF and RKLQ…KWEQ. Composition is skewed to basic and acidic residues over residues 249–272, 362–372, and 421–430; these read LKRE…ERPP, RKLQEKVENSR, and LRRDDVKWEQ. Residues 290-377 adopt a coiled-coil conformation; it reads FSICDNLSEL…VENSRINESS (88 aa).

The protein belongs to the translokin family.

The protein localises to the cytoplasm. The protein resides in the cytoskeleton. It is found in the microtubule organizing center. It localises to the centrosome. Centrosomal protein which may be required for microtubule attachment to centrosomes. The chain is Centrosomal protein CEP57L1 (Cep57l1) from Rattus norvegicus (Rat).